A 401-amino-acid chain; its full sequence is Type 3 secretion system translocon protein SctE (401 aa).

The stretch at 129–160 (IQRLHEQNMKKIEENQEKIKETEENAKQVKKS) forms a coiled coil. The next 2 helical transmembrane spans lie at 176–196 (VIVG…AMMV) and 224–244 (ILGP…TVMT). The stretch at 345–379 (LALNKADMAALQSIIDRLKEELSHLSESHQQVMEL) forms a coiled coil.

Belongs to the SctE/SipB/YopB family. The core secretion machinery of the T3SS is composed of approximately 20 different proteins, including cytoplasmic components, a base, an export apparatus and a needle. This subunit is involved in the formation of a pore, called the translocon, in host membrane. Interacts with YopD/SctB. Together with YopD/SctB, forms a multimeric integral membrane complex.

The protein localises to the secreted. It localises to the host membrane. Component of the type III secretion system (T3SS), also called injectisome, which is used to inject bacterial effector proteins into eukaryotic host cells. YopB/SctE and YopD/SctB are inserted into the host membrane where they form a pore and allow the translocation of effector proteins into the cytosol of target cells. Is an essential virulence determinant. Required for YopE and YopH translocation. Shows membrane disruptive activity in vitro. In terms of biological role, interaction with the host cell triggers a signaling response, via activation of the small GTPase Ras, the MAPK kinases ERK and JNK and the nuclear factor NF-kappa-B pathways, and production of the proinflammatory cytokine interleukin-8 (IL-8). YopB/SctE-dependent signaling response is counteracted by YopE, YopH and YopJ in infected host cells. YopB/SctE is directly responsible for signaling and its insertion in the membrane is important to activate the signaling response in the host cell. The polypeptide is Type 3 secretion system translocon protein SctE (Yersinia pseudotuberculosis serotype I (strain IP32953)).